We begin with the raw amino-acid sequence, 576 residues long: Arginine--tRNA ligase (576 aa).

The 'HIGH' region motif lies at 121–131 (PNLAKEMHVGH).

The protein belongs to the class-I aminoacyl-tRNA synthetase family. Monomer.

It localises to the cytoplasm. It catalyses the reaction tRNA(Arg) + L-arginine + ATP = L-arginyl-tRNA(Arg) + AMP + diphosphate. The chain is Arginine--tRNA ligase from Alteromonas mediterranea (strain DSM 17117 / CIP 110805 / LMG 28347 / Deep ecotype).